Reading from the N-terminus, the 207-residue chain is Holliday junction branch migration complex subunit RuvA (207 aa).

The segment at 1–65 (MYDYIRGVLT…ETEHVLYGFH (65 aa)) is domain I. Positions 66 to 144 (TRGERECFRM…DLLPLDAQIL (79 aa)) are domain II. Residues 145-155 (ASWEPAKPSCM) form a flexible linker region. Positions 155–207 (MEEGIQALAALGYPKSSAERMIAEAMSELPDHASVAEILPIALKKNLQGLNKI) are domain III.

It belongs to the RuvA family. Homotetramer. Forms an RuvA(8)-RuvB(12)-Holliday junction (HJ) complex. HJ DNA is sandwiched between 2 RuvA tetramers; dsDNA enters through RuvA and exits via RuvB. An RuvB hexamer assembles on each DNA strand where it exits the tetramer. Each RuvB hexamer is contacted by two RuvA subunits (via domain III) on 2 adjacent RuvB subunits; this complex drives branch migration. In the full resolvosome a probable DNA-RuvA(4)-RuvB(12)-RuvC(2) complex forms which resolves the HJ.

The protein localises to the cytoplasm. The RuvA-RuvB-RuvC complex processes Holliday junction (HJ) DNA during genetic recombination and DNA repair, while the RuvA-RuvB complex plays an important role in the rescue of blocked DNA replication forks via replication fork reversal (RFR). RuvA specifically binds to HJ cruciform DNA, conferring on it an open structure. The RuvB hexamer acts as an ATP-dependent pump, pulling dsDNA into and through the RuvAB complex. HJ branch migration allows RuvC to scan DNA until it finds its consensus sequence, where it cleaves and resolves the cruciform DNA. The sequence is that of Holliday junction branch migration complex subunit RuvA from Chlamydia abortus (strain DSM 27085 / S26/3) (Chlamydophila abortus).